Here is a 149-residue protein sequence, read N- to C-terminus: 3-dehydroquinate dehydratase (149 aa).

The Proton acceptor role is filled by tyrosine 26. 3 residues coordinate substrate: asparagine 77, histidine 83, and aspartate 90. Residue histidine 103 is the Proton donor of the active site. Substrate-binding positions include 104-105 and arginine 114; that span reads LS.

The protein belongs to the type-II 3-dehydroquinase family. As to quaternary structure, homododecamer.

It catalyses the reaction 3-dehydroquinate = 3-dehydroshikimate + H2O. The protein operates within metabolic intermediate biosynthesis; chorismate biosynthesis; chorismate from D-erythrose 4-phosphate and phosphoenolpyruvate: step 3/7. In terms of biological role, catalyzes a trans-dehydration via an enolate intermediate. The protein is 3-dehydroquinate dehydratase of Edwardsiella ictaluri (strain 93-146).